The sequence spans 353 residues: Probable tRNA pseudouridine synthase B (353 aa).

Asp45 acts as the Nucleophile in catalysis. One can recognise a PUA domain in the interval 211–287; that stretch reads YPKIVAKKSA…DHIFVEAKHG (77 aa). A disordered region spans residues 292–353; that stretch reads VRDREKDVQR…TGVHRRPGSH (62 aa). Basic and acidic residues predominate over residues 309–328; that stretch reads NIRDAAHGPDSRTGRGRKET. Residues 336 to 353 are compositionally biased toward basic residues; that stretch reads RVRKLQNKTGVHRRPGSH.

It belongs to the pseudouridine synthase TruB family. Type 2 subfamily.

It carries out the reaction uridine(55) in tRNA = pseudouridine(55) in tRNA. In terms of biological role, could be responsible for synthesis of pseudouridine from uracil-55 in the psi GC loop of transfer RNAs. This is Probable tRNA pseudouridine synthase B from Thermoplasma volcanium (strain ATCC 51530 / DSM 4299 / JCM 9571 / NBRC 15438 / GSS1).